The primary structure comprises 124 residues: Small ribosomal subunit protein uS13 (124 aa).

Residues 98-124 form a disordered region; sequence VRGQRTRCNARTRKGPRKTVGAKRKEK.

The protein belongs to the universal ribosomal protein uS13 family. In terms of assembly, part of the 30S ribosomal subunit. Forms a loose heterodimer with protein S19. Forms two bridges to the 50S subunit in the 70S ribosome.

Located at the top of the head of the 30S subunit, it contacts several helices of the 16S rRNA. In the 70S ribosome it contacts the 23S rRNA (bridge B1a) and protein L5 of the 50S subunit (bridge B1b), connecting the 2 subunits; these bridges are implicated in subunit movement. Contacts the tRNAs in the A and P-sites. The chain is Small ribosomal subunit protein uS13 from Dictyoglomus thermophilum (strain ATCC 35947 / DSM 3960 / H-6-12).